The following is a 231-amino-acid chain: Thiamine import ATP-binding protein ThiQ (231 aa).

The region spanning 2–230 (LHLDRLLIRQ…PPPALRAYLG (229 aa)) is the ABC transporter domain. 32–39 (GPSGGGKS) is a binding site for ATP.

This sequence belongs to the ABC transporter superfamily. Thiamine importer (TC 3.A.1.19.1) family. The complex is composed of two ATP-binding proteins (ThiQ), two transmembrane proteins (ThiP) and a solute-binding protein (ThiB).

The protein localises to the cell inner membrane. It catalyses the reaction thiamine(out) + ATP + H2O = thiamine(in) + ADP + phosphate + H(+). In terms of biological role, part of the ABC transporter complex ThiBPQ involved in thiamine import. Responsible for energy coupling to the transport system. This is Thiamine import ATP-binding protein ThiQ from Cereibacter sphaeroides (strain ATCC 17023 / DSM 158 / JCM 6121 / CCUG 31486 / LMG 2827 / NBRC 12203 / NCIMB 8253 / ATH 2.4.1.) (Rhodobacter sphaeroides).